A 162-amino-acid chain; its full sequence is uncharacterized protein (162 aa).

This is an uncharacterized protein from Acanthamoeba polyphaga (Amoeba).